Reading from the N-terminus, the 132-residue chain is Phosphoribosyl-AMP cyclohydrolase (132 aa).

Asp-79 lines the Mg(2+) pocket. Cys-80 contacts Zn(2+). Mg(2+) contacts are provided by Asp-81 and Asp-83. Zn(2+)-binding residues include Cys-100 and Cys-107.

Belongs to the PRA-CH family. As to quaternary structure, homodimer. Requires Mg(2+) as cofactor. The cofactor is Zn(2+).

It is found in the cytoplasm. The catalysed reaction is 1-(5-phospho-beta-D-ribosyl)-5'-AMP + H2O = 1-(5-phospho-beta-D-ribosyl)-5-[(5-phospho-beta-D-ribosylamino)methylideneamino]imidazole-4-carboxamide. It participates in amino-acid biosynthesis; L-histidine biosynthesis; L-histidine from 5-phospho-alpha-D-ribose 1-diphosphate: step 3/9. Its function is as follows. Catalyzes the hydrolysis of the adenine ring of phosphoribosyl-AMP. This Acidovorax sp. (strain JS42) protein is Phosphoribosyl-AMP cyclohydrolase.